A 338-amino-acid polypeptide reads, in one-letter code: Cilia- and flagella-associated protein 36 (338 aa).

Residues 142–179 (ISDLEQEEMKLVSEALRLSKEEYEREQLRRSAKELNCT) are a coiled coil. Disordered regions lie at residues 175 to 220 (ELNC…ESPY) and 281 to 314 (KKQESKKMAHNSEVHEEKATCSKQEMTEEEKKSL). Residues 187–202 (KQSNGSERTPSNTELP) show a composition bias toward polar residues. Residues 255 to 330 (NLSQAEKEQL…AEKLKEEVIL (76 aa)) are a coiled coil.

Belongs to the CFAP36 family.

It localises to the nucleus. The protein localises to the cytoplasm. Its subcellular location is the cell projection. The protein resides in the cilium. It is found in the flagellum. In Xenopus laevis (African clawed frog), this protein is Cilia- and flagella-associated protein 36.